Here is a 502-residue protein sequence, read N- to C-terminus: Nostrin (502 aa).

The F-BAR domain maps to 1–260; that stretch reads MRDPLTDCSY…AISKVDVEKD (260 aa). Ser114 bears the Phosphoserine mark. Coiled-coil stretches lie at residues 160-230 and 305-335; these read SMTQ…LNQY and KLWR…SSAS. Residues 292-372 enclose the REM-1 domain; it reads PMDKERRKSL…SYKLSTVLAD (81 aa). Residues 413–437 form a disordered region; it reads KAESKAPAGEQNNPSSSRPGSSVSQ. Positions 423 to 437 are enriched in low complexity; it reads QNNPSSSRPGSSVSQ. Positions 438 to 497 constitute an SH3 domain; that stretch reads GNNQLCKALYTFQARQDDELNLEKGDIVTIHEKKEEGWWFGSLNGKKGHFPAAYVEELPP. At Ser479 the chain carries Phosphoserine.

Homotrimer. Interacts with DAB2. Interacts with NOS3, WASL and CAV1. Interacts (via SH3 domain) with DNM2; this interaction allows the recruitment of NOS3 to dynamin-positive structures. Over-expressed in brain microcapillaries from spontaneously hypertensive rats.

It localises to the cell membrane. The protein localises to the cytoplasmic vesicle. The protein resides in the cytoplasm. Its subcellular location is the cytoskeleton. It is found in the nucleus. Multivalent adapter protein which may decrease NOS3 activity by inducing its translocation away from the plasma membrane. In Rattus norvegicus (Rat), this protein is Nostrin.